The sequence spans 388 residues: Succinate--CoA ligase [ADP-forming] subunit beta (388 aa).

One can recognise an ATP-grasp domain in the interval 9-244 (KQIFAQYGLP…PSQEDAREAA (236 aa)). ATP contacts are provided by residues Lys46, 53-55 (GRG), Glu99, Ala102, and Glu107. The Mg(2+) site is built by Asn199 and Asp213. Substrate-binding positions include Asn264 and 321-323 (GIV).

It belongs to the succinate/malate CoA ligase beta subunit family. As to quaternary structure, heterotetramer of two alpha and two beta subunits. It depends on Mg(2+) as a cofactor.

The catalysed reaction is succinate + ATP + CoA = succinyl-CoA + ADP + phosphate. It carries out the reaction GTP + succinate + CoA = succinyl-CoA + GDP + phosphate. It participates in carbohydrate metabolism; tricarboxylic acid cycle; succinate from succinyl-CoA (ligase route): step 1/1. Its function is as follows. Succinyl-CoA synthetase functions in the citric acid cycle (TCA), coupling the hydrolysis of succinyl-CoA to the synthesis of either ATP or GTP and thus represents the only step of substrate-level phosphorylation in the TCA. The beta subunit provides nucleotide specificity of the enzyme and binds the substrate succinate, while the binding sites for coenzyme A and phosphate are found in the alpha subunit. The protein is Succinate--CoA ligase [ADP-forming] subunit beta of Mannheimia succiniciproducens (strain KCTC 0769BP / MBEL55E).